A 290-amino-acid polypeptide reads, in one-letter code: Ribonuclease 3 (290 aa).

The RNase III domain maps to 20-145 (YSCFYRILGF…FIGAIYLDRG (126 aa)). Residue Glu62 participates in Mg(2+) binding. Asp66 is an active-site residue. 2 residues coordinate Mg(2+): Asn131 and Glu134. Glu134 is a catalytic residue. The DRBM domain maps to 173–242 (NFKSKLIEWS…AQMTLKKIKG (70 aa)). The disordered stretch occupies residues 254–290 (KTQNNVPAEDTTPESEMSLTAENQQIDEIISTEEISV). The span at 267 to 279 (ESEMSLTAENQQI) shows a compositional bias: polar residues.

The protein belongs to the ribonuclease III family. As to quaternary structure, homodimer. The cofactor is Mg(2+).

The protein resides in the cytoplasm. The enzyme catalyses Endonucleolytic cleavage to 5'-phosphomonoester.. Digests double-stranded RNA. Involved in the processing of primary rRNA transcript to yield the immediate precursors to the large and small rRNAs (23S and 16S). Processes some mRNAs, and tRNAs when they are encoded in the rRNA operon. Processes pre-crRNA and tracrRNA of type II CRISPR loci if present in the organism. This chain is Ribonuclease 3, found in Bacteroides fragilis (strain YCH46).